Consider the following 130-residue polypeptide: Small ribosomal subunit protein uS11c (130 aa).

This sequence belongs to the universal ribosomal protein uS11 family. As to quaternary structure, part of the 30S ribosomal subunit.

Its subcellular location is the plastid. It localises to the chloroplast. The polypeptide is Small ribosomal subunit protein uS11c (Trieres chinensis (Marine centric diatom)).